The chain runs to 389 residues: Chalcone synthase 1 (389 aa).

Cysteine 164 is a catalytic residue.

The protein belongs to the thiolase-like superfamily. Chalcone/stilbene synthases family.

It catalyses the reaction (E)-4-coumaroyl-CoA + 3 malonyl-CoA + 3 H(+) = 2',4,4',6'-tetrahydroxychalcone + 3 CO2 + 4 CoA. Its pathway is secondary metabolite biosynthesis; flavonoid biosynthesis. In terms of biological role, the primary product of this enzyme is 4,2',4',6'-tetrahydroxychalcone (also termed naringenin-chalcone or chalcone) which can under specific conditions spontaneously isomerize into naringenin. The polypeptide is Chalcone synthase 1 (CHS1) (Trifolium subterraneum (Subterranean clover)).